The sequence spans 219 residues: ATP-dependent dethiobiotin synthetase BioD (219 aa).

Residue 14–19 participates in ATP binding; it reads DVGKTY. Residue Thr-18 participates in Mg(2+) binding. Lys-37 is an active-site residue. Ser-41 provides a ligand contact to substrate. ATP is bound by residues Asp-54, 114–117, and 175–176; these read EGAG and NN. The Mg(2+) site is built by Asp-54 and Glu-114.

The protein belongs to the dethiobiotin synthetase family. In terms of assembly, homodimer. Requires Mg(2+) as cofactor.

It localises to the cytoplasm. The catalysed reaction is (7R,8S)-7,8-diammoniononanoate + CO2 + ATP = (4R,5S)-dethiobiotin + ADP + phosphate + 3 H(+). It participates in cofactor biosynthesis; biotin biosynthesis; biotin from 7,8-diaminononanoate: step 1/2. Its function is as follows. Catalyzes a mechanistically unusual reaction, the ATP-dependent insertion of CO2 between the N7 and N8 nitrogen atoms of 7,8-diaminopelargonic acid (DAPA, also called 7,8-diammoniononanoate) to form a ureido ring. The polypeptide is ATP-dependent dethiobiotin synthetase BioD (Fusobacterium nucleatum subsp. nucleatum (strain ATCC 25586 / DSM 15643 / BCRC 10681 / CIP 101130 / JCM 8532 / KCTC 2640 / LMG 13131 / VPI 4355)).